The following is a 335-amino-acid chain: Probable peroxidase 26 (335 aa).

Positions 1–18 (MVMIHIFLTVMVVGGVSL) are cleaved as a signal peptide. Intrachain disulfides connect C46-C122, C79-C84, C128-C331, and C205-C237. R73 is an active-site residue. The Ca(2+) site is built by D78, V81, G83, D85, and S87. P168 contacts substrate. H198 serves as a coordination point for heme b. S199 contacts Ca(2+). N-linked (GlcNAc...) asparagine glycosylation occurs at N216. Ca(2+)-binding residues include D255 and S258. Residues N259 and N273 are each glycosylated (N-linked (GlcNAc...) asparagine).

This sequence belongs to the peroxidase family. Classical plant (class III) peroxidase subfamily. The cofactor is heme b. Ca(2+) is required as a cofactor.

The protein resides in the secreted. It carries out the reaction 2 a phenolic donor + H2O2 = 2 a phenolic radical donor + 2 H2O. Functionally, removal of H(2)O(2), oxidation of toxic reductants, biosynthesis and degradation of lignin, suberization, auxin catabolism, response to environmental stresses such as wounding, pathogen attack and oxidative stress. The enzyme activity has to be proved. This Arabidopsis thaliana (Mouse-ear cress) protein is Probable peroxidase 26 (PER26).